We begin with the raw amino-acid sequence, 425 residues long: Serine--tRNA ligase (425 aa).

Position 228-230 (228-230 (TAE)) interacts with L-serine. 259 to 261 (RSE) contacts ATP. Position 282 (Glu282) interacts with L-serine. 346–349 (EIAS) lines the ATP pocket. Residue Ser382 participates in L-serine binding.

This sequence belongs to the class-II aminoacyl-tRNA synthetase family. Type-1 seryl-tRNA synthetase subfamily. As to quaternary structure, homodimer. The tRNA molecule binds across the dimer.

It is found in the cytoplasm. The enzyme catalyses tRNA(Ser) + L-serine + ATP = L-seryl-tRNA(Ser) + AMP + diphosphate + H(+). It catalyses the reaction tRNA(Sec) + L-serine + ATP = L-seryl-tRNA(Sec) + AMP + diphosphate + H(+). It functions in the pathway aminoacyl-tRNA biosynthesis; selenocysteinyl-tRNA(Sec) biosynthesis; L-seryl-tRNA(Sec) from L-serine and tRNA(Sec): step 1/1. Functionally, catalyzes the attachment of serine to tRNA(Ser). Is also able to aminoacylate tRNA(Sec) with serine, to form the misacylated tRNA L-seryl-tRNA(Sec), which will be further converted into selenocysteinyl-tRNA(Sec). In Rickettsia rickettsii (strain Iowa), this protein is Serine--tRNA ligase.